We begin with the raw amino-acid sequence, 488 residues long: IQ domain-containing protein IQM1 (488 aa).

Positions 20-46 are disordered; it reads RTNSFKRDDTNRHQNSPKSTMERSLSF. A compositionally biased stretch (polar residues) spans 32 to 46; sequence HQNSPKSTMERSLSF. Residues 106–135 enclose the IQ domain; the sequence is LDAAATTLQKVYKSYRTRRNLADCAVVVEE. Disordered stretches follow at residues 377–403 and 448–472; these read SFKS…EKEE and SPRV…VRVS. The span at 388–403 shows a compositional bias: basic and acidic residues; it reads RKEVSEEVEIPSEKEE.

In terms of assembly, interacts (via IQ domain) with CAM5. Highly expressed in leaf mesophyll cells. Expressed in roots, rosette and cauline leaves, stems, flowers and siliques.

It is found in the cytoplasm. It localises to the nucleus. Involved in the modulation of stomatal movement. Promotes stomatal opening. May play a role in the regulation of chitin signaling. May be involved in biotic and abiotic stress responses. The chain is IQ domain-containing protein IQM1 from Arabidopsis thaliana (Mouse-ear cress).